The primary structure comprises 844 residues: DNA mismatch repair protein MutS (844 aa).

610–617 (GPNMGGKS) provides a ligand contact to ATP.

The protein belongs to the DNA mismatch repair MutS family.

This protein is involved in the repair of mismatches in DNA. It is possible that it carries out the mismatch recognition step. This protein has a weak ATPase activity. The chain is DNA mismatch repair protein MutS from Francisella tularensis subsp. mediasiatica (strain FSC147).